The following is a 511-amino-acid chain: Xylose import ATP-binding protein XylG (511 aa).

ABC transporter domains follow at residues 6–244 (LEMR…VGRE) and 261–506 (FEAR…IGKP). 38–45 (GENGAGKS) is a binding site for ATP.

Belongs to the ABC transporter superfamily. Xylose importer (TC 3.A.1.2.4) family. As to quaternary structure, the complex is composed of two ATP-binding proteins (XylG), two transmembrane proteins (XylH) and a solute-binding protein (XylF).

Its subcellular location is the cell inner membrane. The enzyme catalyses D-xylose(out) + ATP + H2O = D-xylose(in) + ADP + phosphate + H(+). In terms of biological role, part of the ABC transporter complex XylFGH involved in xylose import. Responsible for energy coupling to the transport system. This chain is Xylose import ATP-binding protein XylG, found in Brucella abortus (strain 2308).